A 253-amino-acid polypeptide reads, in one-letter code: Ribonuclease HII (253 aa).

The RNase H type-2 domain maps to 70–253; that stretch reads DLIAGVDEVG…KTFAPIKDIL (184 aa). The a divalent metal cation site is built by D76, E77, and D168.

Belongs to the RNase HII family. Mn(2+) serves as cofactor. The cofactor is Mg(2+).

The protein localises to the cytoplasm. It carries out the reaction Endonucleolytic cleavage to 5'-phosphomonoester.. Endonuclease that specifically degrades the RNA of RNA-DNA hybrids. The sequence is that of Ribonuclease HII from Leuconostoc mesenteroides subsp. mesenteroides (strain ATCC 8293 / DSM 20343 / BCRC 11652 / CCM 1803 / JCM 6124 / NCDO 523 / NBRC 100496 / NCIMB 8023 / NCTC 12954 / NRRL B-1118 / 37Y).